The primary structure comprises 423 residues: Gamma-glutamyl phosphate reductase (423 aa).

A compositionally biased stretch (low complexity) spans 1–14 (MTLQAAPRSAAAQQ). Positions 1–25 (MTLQAAPRSAAAQQREPDLRQEVHD) are disordered. The span at 15-25 (REPDLRQEVHD) shows a compositional bias: basic and acidic residues.

It belongs to the gamma-glutamyl phosphate reductase family.

The protein localises to the cytoplasm. It catalyses the reaction L-glutamate 5-semialdehyde + phosphate + NADP(+) = L-glutamyl 5-phosphate + NADPH + H(+). Its pathway is amino-acid biosynthesis; L-proline biosynthesis; L-glutamate 5-semialdehyde from L-glutamate: step 2/2. In terms of biological role, catalyzes the NADPH-dependent reduction of L-glutamate 5-phosphate into L-glutamate 5-semialdehyde and phosphate. The product spontaneously undergoes cyclization to form 1-pyrroline-5-carboxylate. This Mycobacterium ulcerans (strain Agy99) protein is Gamma-glutamyl phosphate reductase.